The sequence spans 132 residues: Small ribosomal subunit protein uS8 (132 aa).

It belongs to the universal ribosomal protein uS8 family. As to quaternary structure, part of the 30S ribosomal subunit. Contacts proteins S5 and S12.

Its function is as follows. One of the primary rRNA binding proteins, it binds directly to 16S rRNA central domain where it helps coordinate assembly of the platform of the 30S subunit. The protein is Small ribosomal subunit protein uS8 of Mesorhizobium japonicum (strain LMG 29417 / CECT 9101 / MAFF 303099) (Mesorhizobium loti (strain MAFF 303099)).